Consider the following 266-residue polypeptide: Segregation and condensation protein A (266 aa).

It belongs to the ScpA family. As to quaternary structure, component of a cohesin-like complex composed of ScpA, ScpB and the Smc homodimer, in which ScpA and ScpB bind to the head domain of Smc. The presence of the three proteins is required for the association of the complex with DNA.

Its subcellular location is the cytoplasm. Its function is as follows. Participates in chromosomal partition during cell division. May act via the formation of a condensin-like complex containing Smc and ScpB that pull DNA away from mid-cell into both cell halves. This is Segregation and condensation protein A from Coxiella burnetii (strain RSA 493 / Nine Mile phase I).